Consider the following 35-residue polypeptide: Photosystem II reaction center protein M (35 aa).

A helical transmembrane segment spans residues 5 to 25; it reads ILGLIATALFILIPTSFLIIL.

This sequence belongs to the PsbM family. PSII is composed of 1 copy each of membrane proteins PsbA, PsbB, PsbC, PsbD, PsbE, PsbF, PsbH, PsbI, PsbJ, PsbK, PsbL, PsbM, PsbT, PsbX, PsbY, PsbZ, Psb30/Ycf12, at least 3 peripheral proteins of the oxygen-evolving complex and a large number of cofactors. It forms dimeric complexes.

Its subcellular location is the plastid. It is found in the chloroplast thylakoid membrane. Its function is as follows. One of the components of the core complex of photosystem II (PSII). PSII is a light-driven water:plastoquinone oxidoreductase that uses light energy to abstract electrons from H(2)O, generating O(2) and a proton gradient subsequently used for ATP formation. It consists of a core antenna complex that captures photons, and an electron transfer chain that converts photonic excitation into a charge separation. This subunit is found at the monomer-monomer interface. In Oltmannsiellopsis viridis (Marine flagellate), this protein is Photosystem II reaction center protein M.